The sequence spans 473 residues: Isocitrate dehydrogenase [NADP] (473 aa).

An NADP(+)-binding site is contributed by Thr-104. 5 residues coordinate D-threo-isocitrate: Ser-113, Asn-115, Arg-119, Arg-129, and Arg-153. Position 362 (Asp-362) interacts with Mg(2+). Residues 394–400 (HGTAPKH), Asn-407, Tyr-446, and Arg-450 each bind NADP(+).

The protein belongs to the isocitrate and isopropylmalate dehydrogenases family. As to quaternary structure, homodimer. The cofactor is Mg(2+). It depends on Mn(2+) as a cofactor.

The catalysed reaction is D-threo-isocitrate + NADP(+) = 2-oxoglutarate + CO2 + NADPH. With respect to regulation, inhibited by either oxaloacetate or glyoxylate. Also inhibited by the adenine nucleotides AMP, ADP and ATP and by NADPH, which inhibits the activity by 28% when it is added to the assay mixture at 0.25 mM. Catalyzes the oxidative decarboxylation of isocitrate to 2-oxoglutarate and carbon dioxide with the concomitant reduction of NADP(+). The sequence is that of Isocitrate dehydrogenase [NADP] from Nostoc sp. (strain PCC 7120 / SAG 25.82 / UTEX 2576).